The primary structure comprises 1455 residues: Nik-related protein kinase (1455 aa).

One can recognise a Protein kinase domain in the interval 25–313 (FSLDKAIGLG…SGNMLLHPFV (289 aa)). ATP is bound by residues 31-39 (IGLGTYGRI) and lysine 54. The active-site Proton acceptor is aspartate 177. 2 disordered regions span residues 385–404 (LHGE…PQDQ) and 471–568 (TQDN…EDKE). Polar residues predominate over residues 471–480 (TQDNKATSPE). Residues 494–505 (EALETEQPKDLD) show a composition bias toward basic and acidic residues. Residues 520–531 (QPRQGQAAEQQQ) show a composition bias toward low complexity. Positions 540-568 (PPEEDREPEQAEVQEEAVEPPQAEIEDKE) are enriched in acidic residues. Residues 716 to 750 (RRRHRRWEDIFNQHEEQLRRVENDREDDSSDNDEV) adopt a coiled-coil conformation. 2 disordered regions span residues 760 to 854 (IEPH…PPYS) and 1029 to 1080 (AFGN…TETS). Residues serine 847 and serine 850 each carry the phosphoserine modification. The segment covering 1029–1038 (AFGNHGANRG) has biased composition (low complexity). The span at 1044-1078 (RNREANGRNEENGAFGRDQHVFPEFEHEESDRGTE) shows a compositional bias: basic and acidic residues. Positions 1138–1425 (SSEVYCGSLW…RFLCARGDKM (288 aa)) constitute a CNH domain.

Belongs to the protein kinase superfamily. STE Ser/Thr protein kinase family. STE20 subfamily.

The enzyme catalyses L-seryl-[protein] + ATP = O-phospho-L-seryl-[protein] + ADP + H(+). It catalyses the reaction L-threonyl-[protein] + ATP = O-phospho-L-threonyl-[protein] + ADP + H(+). In terms of biological role, may phosphorylate cofilin-1 and induce actin polymerization through this process, during the late stages of embryogenesis. Involved in the TNF-alpha-induced signaling pathway. In Mus musculus (Mouse), this protein is Nik-related protein kinase (Nrk).